The chain runs to 519 residues: 2-isopropylmalate synthase (519 aa).

The Pyruvate carboxyltransferase domain occupies 5–267 (VKIFDTTLRD…NTNIRSHEIS (263 aa)). Mn(2+)-binding residues include Asp-14, His-202, His-204, and Asn-238. The interval 392–519 (KLLYLQASSG…KKQQTQTAGV (128 aa)) is regulatory domain.

Belongs to the alpha-IPM synthase/homocitrate synthase family. LeuA type 1 subfamily. In terms of assembly, homodimer. Requires Mn(2+) as cofactor.

Its subcellular location is the cytoplasm. The catalysed reaction is 3-methyl-2-oxobutanoate + acetyl-CoA + H2O = (2S)-2-isopropylmalate + CoA + H(+). It participates in amino-acid biosynthesis; L-leucine biosynthesis; L-leucine from 3-methyl-2-oxobutanoate: step 1/4. Functionally, catalyzes the condensation of the acetyl group of acetyl-CoA with 3-methyl-2-oxobutanoate (2-ketoisovalerate) to form 3-carboxy-3-hydroxy-4-methylpentanoate (2-isopropylmalate). The chain is 2-isopropylmalate synthase from Pseudoalteromonas atlantica (strain T6c / ATCC BAA-1087).